The sequence spans 408 residues: S-adenosylmethionine synthase (408 aa).

ATP is bound at residue 140–145 (GQGSVD).

The protein belongs to the AdoMet synthase 2 family. It depends on Mg(2+) as a cofactor.

It carries out the reaction L-methionine + ATP + H2O = S-adenosyl-L-methionine + phosphate + diphosphate. The protein operates within amino-acid biosynthesis; S-adenosyl-L-methionine biosynthesis; S-adenosyl-L-methionine from L-methionine: step 1/1. In terms of biological role, catalyzes the formation of S-adenosylmethionine from methionine and ATP. This Caldivirga maquilingensis (strain ATCC 700844 / DSM 13496 / JCM 10307 / IC-167) protein is S-adenosylmethionine synthase.